Here is a 341-residue protein sequence, read N- to C-terminus: S-adenosylmethionine:tRNA ribosyltransferase-isomerase (341 aa).

The protein belongs to the QueA family. Monomer.

The protein resides in the cytoplasm. The catalysed reaction is 7-aminomethyl-7-carbaguanosine(34) in tRNA + S-adenosyl-L-methionine = epoxyqueuosine(34) in tRNA + adenine + L-methionine + 2 H(+). Its pathway is tRNA modification; tRNA-queuosine biosynthesis. In terms of biological role, transfers and isomerizes the ribose moiety from AdoMet to the 7-aminomethyl group of 7-deazaguanine (preQ1-tRNA) to give epoxyqueuosine (oQ-tRNA). The chain is S-adenosylmethionine:tRNA ribosyltransferase-isomerase from Clostridium perfringens (strain SM101 / Type A).